The chain runs to 279 residues: Large ribosomal subunit protein uL2 (279 aa).

Residues 223–279 are disordered; sequence VAMNPVDHPMGGGEGRSSGGHPRSRKGLYAKGGKTRSANKYSKNMIVKKRVNKRLSK. Over residues 268–279 the composition is skewed to basic residues; it reads IVKKRVNKRLSK.

It belongs to the universal ribosomal protein uL2 family. As to quaternary structure, part of the 50S ribosomal subunit. Forms a bridge to the 30S subunit in the 70S ribosome.

In terms of biological role, one of the primary rRNA binding proteins. Required for association of the 30S and 50S subunits to form the 70S ribosome, for tRNA binding and peptide bond formation. It has been suggested to have peptidyltransferase activity; this is somewhat controversial. Makes several contacts with the 16S rRNA in the 70S ribosome. The chain is Large ribosomal subunit protein uL2 from Cytophaga hutchinsonii (strain ATCC 33406 / DSM 1761 / CIP 103989 / NBRC 15051 / NCIMB 9469 / D465).